Consider the following 315-residue polypeptide: Ornithine carbamoyltransferase (315 aa).

Carbamoyl phosphate-binding positions include 57 to 60, Gln84, Arg108, and 135 to 138; these read STRT and HPCQ. L-ornithine is bound by residues Asn166, Asp230, and 234-235; that span reads SM. Residues 270–271 and Arg298 each bind carbamoyl phosphate; that span reads CL.

The protein belongs to the aspartate/ornithine carbamoyltransferase superfamily. OTCase family.

The protein localises to the cytoplasm. The catalysed reaction is carbamoyl phosphate + L-ornithine = L-citrulline + phosphate + H(+). The protein operates within amino-acid biosynthesis; L-arginine biosynthesis; L-arginine from L-ornithine and carbamoyl phosphate: step 1/3. Reversibly catalyzes the transfer of the carbamoyl group from carbamoyl phosphate (CP) to the N(epsilon) atom of ornithine (ORN) to produce L-citrulline. This Thermococcus kodakarensis (strain ATCC BAA-918 / JCM 12380 / KOD1) (Pyrococcus kodakaraensis (strain KOD1)) protein is Ornithine carbamoyltransferase.